Here is a 164-residue protein sequence, read N- to C-terminus: MTEFTHINQQGHAKMVDVSDKQITKRTAVAHSSITVNETIYKQISNNTNTKGNVLNTAQIAGIMAAKNTSTIIPMCHPLPLTGIDVHFNWDETNAPLYTLNIQTTVSTTGKTGVEMEALTAASATALTIYDMTKAVDKGMIIGETYLESKSGGKSGDFQRQLDQ.

Substrate is bound by residues 75–77 and 116–117; these read MCH and ME. Asp131 is a catalytic residue.

This sequence belongs to the MoaC family. In terms of assembly, homohexamer; trimer of dimers.

The catalysed reaction is (8S)-3',8-cyclo-7,8-dihydroguanosine 5'-triphosphate = cyclic pyranopterin phosphate + diphosphate. The protein operates within cofactor biosynthesis; molybdopterin biosynthesis. Its function is as follows. Catalyzes the conversion of (8S)-3',8-cyclo-7,8-dihydroguanosine 5'-triphosphate to cyclic pyranopterin monophosphate (cPMP). The protein is Cyclic pyranopterin monophosphate synthase of Staphylococcus aureus (strain MRSA252).